Here is a 274-residue protein sequence, read N- to C-terminus: NAD kinase (274 aa).

Residue Asp60 is the Proton acceptor of the active site. Residues 60–61, Lys65, 127–128, and Arg152 each bind NAD(+); these read DG and NE.

This sequence belongs to the NAD kinase family. It depends on a divalent metal cation as a cofactor.

The protein localises to the cytoplasm. It carries out the reaction NAD(+) + ATP = ADP + NADP(+) + H(+). Its function is as follows. Involved in the regulation of the intracellular balance of NAD and NADP, and is a key enzyme in the biosynthesis of NADP. Catalyzes specifically the phosphorylation on 2'-hydroxyl of the adenosine moiety of NAD to yield NADP. In Mycoplasmoides gallisepticum (strain R(low / passage 15 / clone 2)) (Mycoplasma gallisepticum), this protein is NAD kinase.